The following is a 935-amino-acid chain: C-1-tetrahydrofolate synthase, cytoplasmic (935 aa).

Met1 carries the post-translational modification N-acetylmethionine. The interval 2–291 is methylenetetrahydrofolate dehydrogenase and methenyltetrahydrofolate cyclohydrolase (D/C) domain; that stretch reads APAEILNGKE…MLMQSTVESA (290 aa). Substrate contacts are provided by residues 52-56 and 99-101; these read YINVK and VQL. The active site involves Lys56. NADP(+)-binding positions include 172-174 and Ser197; that span reads GRS. 272–276 serves as a coordination point for substrate; sequence PGGVG. The segment at 310-935 is formyltetrahydrofolate synthetase domain; it reads LNLKTPVPSD…PETEQVNGLF (626 aa). At Ser318 the chain carries Phosphoserine. 380 to 387 serves as a coordination point for ATP; that stretch reads TPLGEGKS. Residues Ser413 and Ser490 each carry the phosphoserine modification.

It in the N-terminal section; belongs to the tetrahydrofolate dehydrogenase/cyclohydrolase family. This sequence in the C-terminal section; belongs to the formate--tetrahydrofolate ligase family. In terms of assembly, homodimer. Ubiquitous.

Its subcellular location is the cytoplasm. The enzyme catalyses (6R)-5,10-methylene-5,6,7,8-tetrahydrofolate + NADP(+) = (6R)-5,10-methenyltetrahydrofolate + NADPH. It catalyses the reaction (6R)-5,10-methenyltetrahydrofolate + H2O = (6R)-10-formyltetrahydrofolate + H(+). The catalysed reaction is (6S)-5,6,7,8-tetrahydrofolate + formate + ATP = (6R)-10-formyltetrahydrofolate + ADP + phosphate. It participates in one-carbon metabolism; tetrahydrofolate interconversion. Its function is as follows. Trifunctional enzyme that catalyzes the interconversion of three forms of one-carbon-substituted tetrahydrofolate: (6R)-5,10-methylene-5,6,7,8-tetrahydrofolate, 5,10-methenyltetrahydrofolate and (6S)-10-formyltetrahydrofolate. These derivatives of tetrahydrofolate are differentially required in nucleotide and amino acid biosynthesis, (6S)-10-formyltetrahydrofolate being required for purine biosynthesis while (6R)-5,10-methylene-5,6,7,8-tetrahydrofolate is used for serine and methionine biosynthesis for instance. The polypeptide is C-1-tetrahydrofolate synthase, cytoplasmic (MTHFD1) (Homo sapiens (Human)).